A 148-amino-acid polypeptide reads, in one-letter code: Pseudoazurin (148 aa).

Positions 1-25 (MMIFRALIAAATLAIAIATTLPAAA) are cleaved as a signal peptide. Positions 30 to 118 (VKMLNSGPGG…MGMVALVVVG (89 aa)) constitute a Plastocyanin-like domain. Cu cation-binding residues include His-65, Cys-103, His-106, and Met-111.

It depends on Cu cation as a cofactor.

It localises to the periplasm. This chain is Pseudoazurin, found in Methylorubrum extorquens (strain ATCC 14718 / DSM 1338 / JCM 2805 / NCIMB 9133 / AM1) (Methylobacterium extorquens).